The primary structure comprises 450 residues: Carbamoyl phosphate synthase arginine-specific small chain (450 aa).

A mitochondrion-targeting transit peptide spans 1-29 (MFAARLFKAMPARASAFPSVNASIQSRFM). Residues 220–407 (HVAVIDCGVK…LDSVRKYKAS (188 aa)) form the Glutamine amidotransferase type-1 domain. The Nucleophile role is filled by Cys296. Residues His380 and Glu382 contribute to the active site.

It belongs to the CarA family. In terms of assembly, heterodimer composed of 2 chains; the small (or glutamine) chain promotes the hydrolysis of glutamine to ammonia, which is used by the large (or ammonia) chain to synthesize carbamoyl phosphate.

The protein resides in the mitochondrion matrix. The enzyme catalyses hydrogencarbonate + L-glutamine + 2 ATP + H2O = carbamoyl phosphate + L-glutamate + 2 ADP + phosphate + 2 H(+). It catalyses the reaction L-glutamine + H2O = L-glutamate + NH4(+). It functions in the pathway amino-acid biosynthesis; L-arginine biosynthesis; carbamoyl phosphate from bicarbonate: step 1/1. In terms of biological role, small subunit of the arginine-specific carbamoyl phosphate synthase (CPSase). CPSase catalyzes the formation of carbamoyl phosphate from the ammonia moiety of glutamine, carbonate, and phosphate donated by ATP, the first step of the arginine biosynthetic pathway. The small subunit (glutamine amidotransferase) binds and cleaves glutamine to supply the large subunit with the substrate ammonia. The sequence is that of Carbamoyl phosphate synthase arginine-specific small chain (cpa1) from Aspergillus oryzae (strain ATCC 42149 / RIB 40) (Yellow koji mold).